A 440-amino-acid polypeptide reads, in one-letter code: Transposon Ty1-NL2 Gag polyprotein (440 aa).

4 stretches are compositionally biased toward polar residues: residues Met-1 to Ser-23, Thr-48 to Ser-60, Ser-71 to Asn-97, and Gln-129 to Phe-152. 3 disordered regions span residues Met-1 to Asn-97, Gln-129 to Pro-171, and Gly-352 to Tyr-440. The segment covering Thr-153 to Thr-165 has biased composition (low complexity). The interval Asn-299 to His-401 is RNA-binding. A compositionally biased stretch (low complexity) spans Asn-402 to Ser-418. Ser-416 carries the phosphoserine modification. A compositionally biased stretch (polar residues) spans Lys-419 to Asn-428. The span at Asn-429–Tyr-440 shows a compositional bias: basic and acidic residues.

As to quaternary structure, homotrimer.

It is found in the cytoplasm. Its function is as follows. Capsid protein (CA) is the structural component of the virus-like particle (VLP), forming the shell that encapsulates the retrotransposons dimeric RNA genome. The particles are assembled from trimer-clustered units and there are holes in the capsid shells that allow for the diffusion of macromolecules. CA also has nucleocapsid-like chaperone activity, promoting primer tRNA(i)-Met annealing to the multipartite primer-binding site (PBS), dimerization of Ty1 RNA and initiation of reverse transcription. This Saccharomyces cerevisiae (strain ATCC 204508 / S288c) (Baker's yeast) protein is Transposon Ty1-NL2 Gag polyprotein (TY1A-NL2).